We begin with the raw amino-acid sequence, 169 residues long: Lipoprotein signal peptidase (169 aa).

4 helical membrane-spanning segments follow: residues 10–30 (LPWL…KAFF), 41–61 (VVIP…AFSF), 68–88 (WQRW…VVWL), and 94–114 (GETW…GNLY). Residues Asp-124 and Asp-143 contribute to the active site. A helical membrane pass occupies residues 135 to 155 (YFPAFNLADSAITVGAVMLAL).

It belongs to the peptidase A8 family.

The protein localises to the cell inner membrane. The enzyme catalyses Release of signal peptides from bacterial membrane prolipoproteins. Hydrolyzes -Xaa-Yaa-Zaa-|-(S,diacylglyceryl)Cys-, in which Xaa is hydrophobic (preferably Leu), and Yaa (Ala or Ser) and Zaa (Gly or Ala) have small, neutral side chains.. It functions in the pathway protein modification; lipoprotein biosynthesis (signal peptide cleavage). This protein specifically catalyzes the removal of signal peptides from prolipoproteins. The sequence is that of Lipoprotein signal peptidase from Pseudomonas paraeruginosa (strain DSM 24068 / PA7) (Pseudomonas aeruginosa (strain PA7)).